Reading from the N-terminus, the 739-residue chain is Tegument protein UL47 (739 aa).

Basic and acidic residues predominate over residues 1–13 (MDAARDGRPERRR). 2 disordered regions span residues 1-123 (MDAA…QDYL) and 154-198 (QFPP…DDAA). The Nuclear localization signal signature appears at 10-30 (ERRRAVSGTYRTHPFQRPSAR). Basic residues predominate over residues 28–53 (SARRSAGRPARCGRRGRGAPRVRRPR). The segment covering 62 to 87 (EDTSEDENVYDYIDGDSSDSADDYDS) has biased composition (acidic residues). Residues 94 to 121 (RGPNHGAGDAMDTDAPPERAPEGGAPQD) carry the Nuclear export signal motif. A Nuclear export signal motif is present at residues 483–493 (LSAYLTLFVAL).

It belongs to the alphaherpesvirinae HHV-1 UL47 family. Interacts with US3 kinase. Interacts with UL31 and UL34; these interactions seem important for efficient virion nuclear egress. Interacts with UL41/VHS. Interacts with host DDB1. Monoubiquitinated. In terms of processing, phosphorylated by US3. This phosphorylation is required for proper nuclear localization.

It localises to the virion tegument. It is found in the host nucleus. The protein localises to the host cytoplasm. Functionally, tegument protein that can bind to various RNA transcripts. Plays a role in the attenuation of selective viral and cellular mRNA degradation by modulating the activity of host shutoff RNase UL41/VHS. Also plays a role in the primary envelopment of virions in the perinuclear space, probably by interacting with two nuclear egress proteins UL31 and UL34. This Bovine herpesvirus 1.1 (strain Cooper) (BoHV-1) protein is Tegument protein UL47.